A 906-amino-acid polypeptide reads, in one-letter code: uncharacterized protein (906 aa).

2 disordered regions span residues 231 to 322 and 865 to 906; these read KEDA…PSTI and AGAY…DEDE. The span at 236-250 shows a compositional bias: low complexity; sequence TTKQTTTTTTTTPQT. Over residues 264 to 281 the composition is skewed to pro residues; sequence TPTPAPAPKPTTPKPTPA. A compositionally biased stretch (polar residues) spans 302–314; that stretch reads SVNNIPTPSDTNE. Residues 867-906 are compositionally biased toward acidic residues; sequence AYEDDDDDEGEGNEDDEDNDENEDEDEGEGEGDSSEDEDE.

This is an uncharacterized protein from Dictyostelium sp. (strain GA11) (Slime mold).